A 218-amino-acid chain; its full sequence is Adenylate kinase (218 aa).

Residue 10–15 (GAGKGT) coordinates ATP. An NMP region spans residues 30–59 (STGDMLRAAVQAQTPVGIEAKKVMDAGKLV). AMP is bound by residues Thr-31, Arg-36, 57–59 (KLV), 85–88 (GFPR), and Gln-92. Positions 122–159 (GRRVHLSSGRTYHVRFNPPKKEGLDDLTGEPLVQREDD) are LID. ATP-binding positions include Arg-123 and 132–133 (TY). Residues Arg-156 and Arg-167 each contribute to the AMP site. Gly-203 is a binding site for ATP.

Belongs to the adenylate kinase family. In terms of assembly, monomer.

It is found in the cytoplasm. It carries out the reaction AMP + ATP = 2 ADP. It functions in the pathway purine metabolism; AMP biosynthesis via salvage pathway; AMP from ADP: step 1/1. Its function is as follows. Catalyzes the reversible transfer of the terminal phosphate group between ATP and AMP. Plays an important role in cellular energy homeostasis and in adenine nucleotide metabolism. In Chlorobium phaeobacteroides (strain DSM 266 / SMG 266 / 2430), this protein is Adenylate kinase.